Here is a 472-residue protein sequence, read N- to C-terminus: Carbohydrate sulfotransferase 3 (472 aa).

The Cytoplasmic portion of the chain corresponds to 1 to 19 (MEKGLALPQDFRDLVHSLK). Residues 20 to 38 (IRGRYVLFLAFVVIVFIFI) traverse the membrane as a helical; Signal-anchor for type II membrane protein segment. Residues 39 to 472 (EKENKIISRV…LEERGTFWVT (434 aa)) are Lumenal-facing. N63, N74, and N96 each carry an N-linked (GlcNAc...) asparagine glycan. 135 to 141 (TRTGSSF) is a 3'-phosphoadenylyl sulfate binding site. N-linked (GlcNAc...) asparagine glycosylation occurs at N250. Residue 295 to 303 (RDPRAVLAS) coordinates 3'-phosphoadenylyl sulfate. N-linked (GlcNAc...) asparagine glycosylation is found at N413 and N457.

It belongs to the sulfotransferase 1 family. Gal/GlcNAc/GalNAc subfamily. In terms of processing, N-glycosylated. Widely expressed. Highly expressed in spleen, lung, eye and stomach. Constitutively expressed at low level during the mid- to late-gestation period. Expressed in the brain in a temporally controlled manner: peaks at 2 weeks after birth in the cerebellum, but at 3 weeks in the cerebrum. Localizes to stromal cells in the bone marrow, and stromal cells in the marginal zone and red pulp of the spleen, but the sense probe did not.

Its subcellular location is the golgi apparatus membrane. The catalysed reaction is chondroitin beta-D-glucuronate + n 3'-phosphoadenylyl sulfate = chondroitin 6'-sulfate + n adenosine 3',5'-bisphosphate + n H(+). The enzyme catalyses 3'-phosphoadenylyl sulfate + keratan = adenosine 3',5'-bisphosphate + keratan 6'-sulfate.. Functionally, sulfotransferase that utilizes 3'-phospho-5'-adenylyl sulfate (PAPS) as sulfonate donor to catalyze the transfer of sulfate to position 6 of the N-acetylgalactosamine (GalNAc) residue of chondroitin. Chondroitin sulfate constitutes the predominant proteoglycan present in cartilage and is distributed on the surfaces of many cells and extracellular matrices. Catalyzes with a lower efficiency the sulfation of Gal residues of keratan sulfate, another glycosaminoglycan. Can also catalyze the sulfation of the Gal residues in sialyl N-acetyllactosamine (sialyl LacNAc) oligosaccharides. May play a role in the maintenance of naive T-lymphocytes in the spleen. The sequence is that of Carbohydrate sulfotransferase 3 (Chst3) from Mus musculus (Mouse).